The primary structure comprises 310 residues: 17-beta-hydroxysteroid dehydrogenase type 3 (310 aa).

48 to 77 (GQWAVITGAGDGIGKAYSFELAKRGLNVVL) provides a ligand contact to NADP(+). Serine 185 serves as a coordination point for substrate. The active-site Proton acceptor is the tyrosine 198.

The protein belongs to the short-chain dehydrogenases/reductases (SDR) family. 17-beta-HSD 3 subfamily. In terms of tissue distribution, testis.

Its subcellular location is the endoplasmic reticulum. It catalyses the reaction a 17beta-hydroxy steroid + NADP(+) = a 17-oxo steroid + NADPH + H(+). The catalysed reaction is testosterone + NADP(+) = androst-4-ene-3,17-dione + NADPH + H(+). It carries out the reaction 17beta-estradiol + NADP(+) = estrone + NADPH + H(+). The enzyme catalyses 3beta-hydroxyandrost-5-en-17-one + NADPH + H(+) = androst-5-en-3beta,17beta-diol + NADP(+). It catalyses the reaction 17beta-hydroxy-5alpha-androstan-3-one + NADP(+) = 5alpha-androstan-3,17-dione + NADPH + H(+). The catalysed reaction is androsterone + NADPH + H(+) = 5alpha-androstane-3alpha,17beta-diol + NADP(+). It carries out the reaction 3beta-hydroxy-5alpha-androstan-17-one + NADPH + H(+) = 5alpha-androstane-3beta,17beta-diol + NADP(+). The enzyme catalyses androst-4-ene-3,11,17-trione + NADPH + H(+) = 17beta-hydroxyandrost-4-ene-3,11-dione + NADP(+). It catalyses the reaction 11beta-hydroxyandrost-4-ene-3,17-dione + NADPH + H(+) = 11beta,17beta-dihydroxyandrost-4-ene-3-one + NADP(+). It participates in hormone biosynthesis; testosterone biosynthesis. The protein operates within steroid metabolism. Functionally, catalyzes the conversion of 17-oxosteroids to 17beta-hydroxysteroids. Favors the reduction of androstenedione to testosterone. Testosterone is the key androgen driving male development and function. Uses NADPH while the two other EDH17B enzymes use NADH. Androgens such as epiandrosterone, dehydroepiandrosterone, androsterone and androstanedione are accepted as substrates and reduced at C-17. Can reduce 11-ketoandrostenedione as well as 11beta-hydroxyandrostenedione at C-17 to the respective testosterone forms. The protein is 17-beta-hydroxysteroid dehydrogenase type 3 of Homo sapiens (Human).